A 401-amino-acid chain; its full sequence is Argininosuccinate synthase (401 aa).

9-17 (AYSGGLDTS) is an ATP binding site. Residue Tyr86 coordinates L-citrulline. Gly116 lines the ATP pocket. The L-aspartate site is built by Thr118, Asn122, and Asp123. Asn122 lines the L-citrulline pocket. 5 residues coordinate L-citrulline: Arg126, Ser174, Ser183, Glu259, and Tyr271.

The protein belongs to the argininosuccinate synthase family. Type 1 subfamily. Homotetramer.

It is found in the cytoplasm. The catalysed reaction is L-citrulline + L-aspartate + ATP = 2-(N(omega)-L-arginino)succinate + AMP + diphosphate + H(+). It functions in the pathway amino-acid biosynthesis; L-arginine biosynthesis; L-arginine from L-ornithine and carbamoyl phosphate: step 2/3. The protein is Argininosuccinate synthase of Bacillus thuringiensis (strain Al Hakam).